A 285-amino-acid chain; its full sequence is MKYIGAHVSAAGGLANAPARAAEIGATAFALFTKNQRQWRAAPLTPQVIDDFKIACEKYHFSAAQILPHDSYLINLGHPVSEALEKSRDAFLDEMQRCEQLGLTLLNFHPGSHLMQIAQEDCLARIAESINIALAQTEGVTAVIENTAGQGSNLGFEFEQLAAIIDGVEDKSRVGVCIDTCHAFAAGYDLRTPEACEKTFAEFGKIVGFQYLRGMHLNDAKSAFGSRVDRHHSLGEGNIGHDAFRWIMQDGRFDGIPLILETINPDIWAEEIAWLKAQQIAEAMA.

Zn(2+)-binding residues include H69, H109, E145, D179, H182, H216, D229, H231, and E261.

This sequence belongs to the AP endonuclease 2 family. The cofactor is Zn(2+).

It carries out the reaction Endonucleolytic cleavage to 5'-phosphooligonucleotide end-products.. Endonuclease IV plays a role in DNA repair. It cleaves phosphodiester bonds at apurinic or apyrimidinic (AP) sites, generating a 3'-hydroxyl group and a 5'-terminal sugar phosphate. This Salmonella typhimurium (strain LT2 / SGSC1412 / ATCC 700720) protein is Probable endonuclease 4.